The sequence spans 146 residues: MRKMFICLHNTYSAKQVEEFGRIAYGFDINTIVVTKATASAAQSGIPTLHKMAYKLGKNVLFFEELDDAIEVLRPEKVFLIGNKSICDEKVDFNEVGENDLVVFCGASTGFTKLELEKGLGRYIVENEIGALGNLAIFLYEMSKKI.

To A.pernix APE2001.

The enzyme catalyses Endonucleolytic cleavage of DNA to give specific double-stranded fragments with terminal 5'-phosphates.. A putative type II restriction enzyme, its methylase would be M.MjaORF1200P (AC Q58600). The chain is Putative type II restriction enzyme MjaORF1200P from Methanocaldococcus jannaschii (strain ATCC 43067 / DSM 2661 / JAL-1 / JCM 10045 / NBRC 100440) (Methanococcus jannaschii).